The chain runs to 431 residues: 5-methylthioadenosine/S-adenosylhomocysteine deaminase (431 aa).

Residues H63 and H65 each coordinate Zn(2+). E92, R144, and H184 together coordinate substrate. Position 211 (H211) interacts with Zn(2+). 2 residues coordinate substrate: E214 and D299. Residue D299 participates in Zn(2+) binding.

This sequence belongs to the metallo-dependent hydrolases superfamily. MTA/SAH deaminase family. Requires Zn(2+) as cofactor.

The enzyme catalyses S-adenosyl-L-homocysteine + H2O + H(+) = S-inosyl-L-homocysteine + NH4(+). It carries out the reaction S-methyl-5'-thioadenosine + H2O + H(+) = S-methyl-5'-thioinosine + NH4(+). Its function is as follows. Catalyzes the deamination of 5-methylthioadenosine and S-adenosyl-L-homocysteine into 5-methylthioinosine and S-inosyl-L-homocysteine, respectively. Is also able to deaminate adenosine. The chain is 5-methylthioadenosine/S-adenosylhomocysteine deaminase from Thermoanaerobacter pseudethanolicus (strain ATCC 33223 / 39E) (Clostridium thermohydrosulfuricum).